Consider the following 355-residue polypeptide: MRISDRGYGEEGRERLTLVPENVDDLWHLAHVLEPGDLVEGDTTRRIQRNDDQMRDTGGQREHLFVTLQVDEVEFARFANRLRVSGVIVGCSREDQLNAHHTINVEEHDEITVEKHFKPDQTERLEEATEAAENPDVAIATVEEGAAYVHTVQQYGTEEYASFTKPTGKGDYSRPREELFAELGEALAHLDADAVILAGPGFTKQDALDYITEEYRDLADRITTVDTSAAGDRGVHEVLKRGAVDEVQKETRISKEATLIDDLTAEIAQGAKATYGPEDVAEAAEFGAIETLLVVDDRLRTERQGEGDWSIDVNEVIESVEQQGGDVVVFSSEFAPGEQLSNLGGIAAILRYRLQ.

This sequence belongs to the eukaryotic release factor 1 family. Pelota subfamily. In terms of assembly, monomer. It depends on a divalent metal cation as a cofactor.

The protein localises to the cytoplasm. Its function is as follows. May function in recognizing stalled ribosomes, interact with stem-loop structures in stalled mRNA molecules, and effect endonucleolytic cleavage of the mRNA. May play a role in the release non-functional ribosomes and degradation of damaged mRNAs. Has endoribonuclease activity. In Halorubrum lacusprofundi (strain ATCC 49239 / DSM 5036 / JCM 8891 / ACAM 34), this protein is Protein pelota homolog.